The following is a 68-amino-acid chain: Large ribosomal subunit protein bL31 (68 aa).

Zn(2+)-binding residues include Cys16, Cys18, Cys38, and Cys41.

This sequence belongs to the bacterial ribosomal protein bL31 family. Type A subfamily. As to quaternary structure, part of the 50S ribosomal subunit. It depends on Zn(2+) as a cofactor.

In terms of biological role, binds the 23S rRNA. This is Large ribosomal subunit protein bL31 from Thiobacillus denitrificans (strain ATCC 25259 / T1).